The chain runs to 131 residues: Inner membrane protein YecN (131 aa).

Topologically, residues Met-1–Thr-107 are cytoplasmic. A helical membrane pass occupies residues Trp-108–Phe-128. Residues Ser-129–Arg-131 are Periplasmic-facing.

The protein localises to the cell inner membrane. In Escherichia coli O6:H1 (strain CFT073 / ATCC 700928 / UPEC), this protein is Inner membrane protein YecN (yecN).